A 392-amino-acid polypeptide reads, in one-letter code: Methylthioribose-1-phosphate isomerase (392 aa).

The Proton donor role is filled by aspartate 268.

It belongs to the eIF-2B alpha/beta/delta subunits family. MtnA subfamily.

It is found in the cytoplasm. It localises to the nucleus. It catalyses the reaction 5-(methylsulfanyl)-alpha-D-ribose 1-phosphate = 5-(methylsulfanyl)-D-ribulose 1-phosphate. It functions in the pathway amino-acid biosynthesis; L-methionine biosynthesis via salvage pathway; L-methionine from S-methyl-5-thio-alpha-D-ribose 1-phosphate: step 1/6. Catalyzes the interconversion of methylthioribose-1-phosphate (MTR-1-P) into methylthioribulose-1-phosphate (MTRu-1-P). In Ajellomyces capsulatus (strain G186AR / H82 / ATCC MYA-2454 / RMSCC 2432) (Darling's disease fungus), this protein is Methylthioribose-1-phosphate isomerase.